Consider the following 361-residue polypeptide: Chorismate synthase (361 aa).

NADP(+) is bound by residues R48 and R54. FMN-binding positions include 125–127 (RSS), 238–239 (NA), G278, 293–297 (KPTSS), and R319.

This sequence belongs to the chorismate synthase family. As to quaternary structure, homotetramer. The cofactor is FMNH2.

The enzyme catalyses 5-O-(1-carboxyvinyl)-3-phosphoshikimate = chorismate + phosphate. It functions in the pathway metabolic intermediate biosynthesis; chorismate biosynthesis; chorismate from D-erythrose 4-phosphate and phosphoenolpyruvate: step 7/7. Functionally, catalyzes the anti-1,4-elimination of the C-3 phosphate and the C-6 proR hydrogen from 5-enolpyruvylshikimate-3-phosphate (EPSP) to yield chorismate, which is the branch point compound that serves as the starting substrate for the three terminal pathways of aromatic amino acid biosynthesis. This reaction introduces a second double bond into the aromatic ring system. This Edwardsiella ictaluri (strain 93-146) protein is Chorismate synthase.